Here is a 518-residue protein sequence, read N- to C-terminus: MSVNRSSIKSLLMVFMIVSSSLLAPVGGAAADEFRTPAASDTSPEAGECSNLDDFIMFLSVGRINADSCSRQAYVDAAVQDMKDSDANQTKVDIYSAAAGVKGGSETWAAPYDNYLNDTESIAWMKAESAIAQSYSEGESKTEAKVAAKAAIADYYATKQKNLIEQWNFANAQMFTLREQARMEDGISRNYVEPAYRNVEKTNSPDYSLAYSNTTVEKSLVDGTTVNTTGVSMDVTVQHTTVSDVATVSSGPVRAGKYNNQYNEWKATYYSWSVEPASPSQDTLYAVHFQPYADRWQRIVDMNGALQSEADNFVNATWDDYDTGQINASDVLSANTAMSEYGVRSGSESEGLWRSTAALSMMGYDTPNLNNSGMMTVEYKNVQHTGLLMAKNAPNGSWQVNTTYNTSNIDGPVFMATTEGTKLDFADGEEFTIVGMTAKDGTAVNSTQTTKYRYKTANTTELLEVQNQLIELRQEIEDREPEAGGFFGSGSTDTMLVGLLALAGVLLLAQSNNRGGRR.

Residues 1-31 (MSVNRSSIKSLLMVFMIVSSSLLAPVGGAAA) form the signal peptide. The Extracellular segment spans residues 32–485 (DEFRTPAASD…IEDREPEAGG (454 aa)). The N-linked (GlcNAc...) (hybrid) asparagine; by host glycan is linked to asparagine 213. A helical membrane pass occupies residues 486–506 (FFGSGSTDTMLVGLLALAGVL). The Cytoplasmic portion of the chain corresponds to 507 to 518 (LLAQSNNRGGRR).

N-glycosylated by a pentasaccharide comprising glucose, glucuronic acid and a terminal 5-N-formyl-legionaminic acid residue.

Its subcellular location is the virion membrane. In terms of biological role, envelope protein that may play a role in host-cell attachment and viral genome entry. In Halorubrum sp. PV6 (HRPV-1), this protein is Envelope protein.